The sequence spans 379 residues: Synaptic vesicle membrane protein VAT-1 (379 aa).

Ser-273 bears the Phosphoserine mark.

This sequence belongs to the zinc-containing alcohol dehydrogenase family. Quinone oxidoreductase subfamily. In terms of tissue distribution, cholinergic synaptic vesicles.

Its subcellular location is the cytoplasmic vesicle. It is found in the secretory vesicle. The protein resides in the synaptic vesicle membrane. Functionally, may play a central role in the functions mediated by specific classes of synaptic vesicles. In Tetronarce californica (Pacific electric ray), this protein is Synaptic vesicle membrane protein VAT-1.